The primary structure comprises 140 residues: uncharacterized protein (140 aa).

N36 carries N-linked (GlcNAc...) asparagine glycosylation. The chain crosses the membrane as a helical span at residues 91 to 107; the sequence is LFMSLIGLCVCYMNLVF. Over residues 113–122 the composition is skewed to polar residues; it reads QPSSSGSKGN. Residues 113–140 are disordered; sequence QPSSSGSKGNTETTIETTTEVETETAKQ. Residues 131–140 show a composition bias toward acidic residues; it reads TEVETETAKQ.

It is found in the endoplasmic reticulum membrane. This is an uncharacterized protein from Saccharomyces cerevisiae (strain ATCC 204508 / S288c) (Baker's yeast).